Here is a 423-residue protein sequence, read N- to C-terminus: Adenylosuccinate synthetase (423 aa).

Residues 11–17 and 39–41 each bind GTP; these read GDEGKGK and GHT. The active-site Proton acceptor is the D12. Positions 12 and 39 each coordinate Mg(2+). IMP is bound by residues 12–15, 37–40, T129, R143, N219, T234, and R298; these read DEGK and NAGH. H40 serves as the catalytic Proton donor. Residue 294–300 participates in substrate binding; it reads VTTGRRR. Residues R300, 326-328, and 411-413 each bind GTP; these read KLD and GTG.

It belongs to the adenylosuccinate synthetase family. In terms of assembly, homodimer. It depends on Mg(2+) as a cofactor.

The protein resides in the cytoplasm. It carries out the reaction IMP + L-aspartate + GTP = N(6)-(1,2-dicarboxyethyl)-AMP + GDP + phosphate + 2 H(+). Its pathway is purine metabolism; AMP biosynthesis via de novo pathway; AMP from IMP: step 1/2. In terms of biological role, plays an important role in the de novo pathway and in the salvage pathway of purine nucleotide biosynthesis. Catalyzes the first committed step in the biosynthesis of AMP from IMP. The protein is Adenylosuccinate synthetase of Penicillium rubens (strain ATCC 28089 / DSM 1075 / NRRL 1951 / Wisconsin 54-1255) (Penicillium chrysogenum).